Reading from the N-terminus, the 536-residue chain is Putative UDP-glucuronosyltransferase ugt-47 (536 aa).

The first 21 residues, M1–A21, serve as a signal peptide directing secretion. N52 and N308 each carry an N-linked (GlcNAc...) asparagine glycan. Residues I497–I517 form a helical membrane-spanning segment.

Belongs to the UDP-glycosyltransferase family.

The protein resides in the membrane. It catalyses the reaction glucuronate acceptor + UDP-alpha-D-glucuronate = acceptor beta-D-glucuronoside + UDP + H(+). The sequence is that of Putative UDP-glucuronosyltransferase ugt-47 (ugt-47) from Caenorhabditis briggsae.